The primary structure comprises 377 residues: tRNA(Met) cytidine acetate ligase (377 aa).

ATP contacts are provided by residues 7 to 20 (ITEY…HLFH), glycine 100, asparagine 153, and arginine 178.

This sequence belongs to the TmcAL family.

It localises to the cytoplasm. The catalysed reaction is cytidine(34) in elongator tRNA(Met) + acetate + ATP = N(4)-acetylcytidine(34) in elongator tRNA(Met) + AMP + diphosphate. In terms of biological role, catalyzes the formation of N(4)-acetylcytidine (ac(4)C) at the wobble position of elongator tRNA(Met), using acetate and ATP as substrates. First activates an acetate ion to form acetyladenylate (Ac-AMP) and then transfers the acetyl group to tRNA to form ac(4)C34. The chain is tRNA(Met) cytidine acetate ligase from Staphylococcus epidermidis (strain ATCC 12228 / FDA PCI 1200).